Reading from the N-terminus, the 235-residue chain is NAD(P)H-hydrate epimerase (235 aa).

Positions 18-221 (AAKIDEQLFS…GLVEEHGLQM (204 aa)) constitute a YjeF N-terminal domain. Position 65-69 (65-69 (NNGGD)) interacts with (6S)-NADPHX. K(+) is bound by residues N66 and D127. Residues 131–137 (GFSFKPP) and D160 contribute to the (6S)-NADPHX site. S163 is a K(+) binding site.

It belongs to the NnrE/AIBP family. The cofactor is K(+).

The enzyme catalyses (6R)-NADHX = (6S)-NADHX. It catalyses the reaction (6R)-NADPHX = (6S)-NADPHX. Catalyzes the epimerization of the S- and R-forms of NAD(P)HX, a damaged form of NAD(P)H that is a result of enzymatic or heat-dependent hydration. This is a prerequisite for the S-specific NAD(P)H-hydrate dehydratase to allow the repair of both epimers of NAD(P)HX. The protein is NAD(P)H-hydrate epimerase of Caenorhabditis briggsae.